Reading from the N-terminus, the 332-residue chain is Glycerol-3-phosphate dehydrogenase [NAD(P)+] 2 (332 aa).

NADPH-binding residues include serine 17, tryptophan 18, arginine 37, and lysine 112. The sn-glycerol 3-phosphate site is built by lysine 112 and glycine 140. Alanine 144 provides a ligand contact to NADPH. Residues lysine 195, aspartate 243, serine 253, arginine 254, and asparagine 255 each coordinate sn-glycerol 3-phosphate. Catalysis depends on lysine 195, which acts as the Proton acceptor. Arginine 254 contributes to the NADPH binding site. 2 residues coordinate NADPH: valine 278 and glutamate 280.

It belongs to the NAD-dependent glycerol-3-phosphate dehydrogenase family.

It is found in the cytoplasm. It catalyses the reaction sn-glycerol 3-phosphate + NAD(+) = dihydroxyacetone phosphate + NADH + H(+). The catalysed reaction is sn-glycerol 3-phosphate + NADP(+) = dihydroxyacetone phosphate + NADPH + H(+). It functions in the pathway membrane lipid metabolism; glycerophospholipid metabolism. Functionally, catalyzes the reduction of the glycolytic intermediate dihydroxyacetone phosphate (DHAP) to sn-glycerol 3-phosphate (G3P), the key precursor for phospholipid synthesis. The sequence is that of Glycerol-3-phosphate dehydrogenase [NAD(P)+] 2 from Mycolicibacterium paratuberculosis (strain ATCC BAA-968 / K-10) (Mycobacterium paratuberculosis).